The following is a 127-amino-acid chain: Holo-[acyl-carrier-protein] synthase (127 aa).

Residues Asp-9 and Glu-58 each coordinate Mg(2+).

Belongs to the P-Pant transferase superfamily. AcpS family. Mg(2+) is required as a cofactor.

The protein localises to the cytoplasm. It carries out the reaction apo-[ACP] + CoA = holo-[ACP] + adenosine 3',5'-bisphosphate + H(+). Its function is as follows. Transfers the 4'-phosphopantetheine moiety from coenzyme A to a Ser of acyl-carrier-protein. In Shewanella oneidensis (strain ATCC 700550 / JCM 31522 / CIP 106686 / LMG 19005 / NCIMB 14063 / MR-1), this protein is Holo-[acyl-carrier-protein] synthase.